The following is a 252-amino-acid chain: MILHAQAKHGKPGLPWLVFLHGFSGDCLEWQEVGEAFADYSRLYVDLPGHGGSAAISVDGFDDVTDLLRKTLVSYNILSFWLVGYSLGGRVAMMAACQGLAGLCGVVVEGGHPGLQNAEQRAERQRSDRQWAQRFRSEPLTAVFADWYQQPVFASLNDDQRRELVVLRSNNNGATLAAMLEATSLAVQPDLRANLSARTFAFYYLCGERDSKFRALAAELAADCHVIPRAGHNAHRENPAGVIASLAQILRF.

This sequence belongs to the AB hydrolase superfamily. MenH family. In terms of assembly, monomer.

It carries out the reaction 5-enolpyruvoyl-6-hydroxy-2-succinyl-cyclohex-3-ene-1-carboxylate = (1R,6R)-6-hydroxy-2-succinyl-cyclohexa-2,4-diene-1-carboxylate + pyruvate. The protein operates within quinol/quinone metabolism; 1,4-dihydroxy-2-naphthoate biosynthesis; 1,4-dihydroxy-2-naphthoate from chorismate: step 3/7. It functions in the pathway quinol/quinone metabolism; menaquinone biosynthesis. In terms of biological role, catalyzes a proton abstraction reaction that results in 2,5-elimination of pyruvate from 2-succinyl-5-enolpyruvyl-6-hydroxy-3-cyclohexene-1-carboxylate (SEPHCHC) and the formation of 2-succinyl-6-hydroxy-2,4-cyclohexadiene-1-carboxylate (SHCHC). The chain is 2-succinyl-6-hydroxy-2,4-cyclohexadiene-1-carboxylate synthase from Escherichia coli O157:H7.